The chain runs to 412 residues: Probable beta-1,4-xylosyltransferase IRX10 (412 aa).

The helical; Signal-anchor for type II membrane protein transmembrane segment at 1–21 (MKIHSCLSAILLFLFFSASSA) threads the bilayer. The Lumenal segment spans residues 22-412 (KQNVRTERIS…AGPVADLKPW (391 aa)). Asparagine 139 and asparagine 400 each carry an N-linked (GlcNAc...) asparagine glycan.

The protein belongs to the glycosyltransferase 47 family. As to expression, limited to xylem cells. Expressed in the root tip, xylem cells of roots, and in the vasculature of roots, cotyledons and leaves.

It is found in the golgi apparatus membrane. Involved in the synthesis of the hemicellulose glucuronoxylan, a major component of secondary cell walls. Probably involved in the elongation of glucuronoxylan xylosyl backbone, especially in the formation of GlcUA side chain of xylans. This is Probable beta-1,4-xylosyltransferase IRX10 (IRX10) from Arabidopsis thaliana (Mouse-ear cress).